A 520-amino-acid chain; its full sequence is Probable DNA ligase (520 aa).

Glu213 serves as a coordination point for ATP. Catalysis depends on Lys215, which acts as the N6-AMP-lysine intermediate. ATP contacts are provided by Arg220, Arg235, Glu264, Phe300, Arg372, and Lys378.

The protein belongs to the ATP-dependent DNA ligase family. Mg(2+) is required as a cofactor.

The catalysed reaction is ATP + (deoxyribonucleotide)n-3'-hydroxyl + 5'-phospho-(deoxyribonucleotide)m = (deoxyribonucleotide)n+m + AMP + diphosphate.. Functionally, DNA ligase that seals nicks in double-stranded DNA during DNA replication, DNA recombination and DNA repair. This chain is Probable DNA ligase, found in Mycobacterium sp. (strain JLS).